A 309-amino-acid chain; its full sequence is Methionyl-tRNA formyltransferase (309 aa).

110 to 113 (SLLP) is a binding site for (6S)-5,6,7,8-tetrahydrofolate.

This sequence belongs to the Fmt family.

It carries out the reaction L-methionyl-tRNA(fMet) + (6R)-10-formyltetrahydrofolate = N-formyl-L-methionyl-tRNA(fMet) + (6S)-5,6,7,8-tetrahydrofolate + H(+). Functionally, attaches a formyl group to the free amino group of methionyl-tRNA(fMet). The formyl group appears to play a dual role in the initiator identity of N-formylmethionyl-tRNA by promoting its recognition by IF2 and preventing the misappropriation of this tRNA by the elongation apparatus. The sequence is that of Methionyl-tRNA formyltransferase from Caldanaerobacter subterraneus subsp. tengcongensis (strain DSM 15242 / JCM 11007 / NBRC 100824 / MB4) (Thermoanaerobacter tengcongensis).